Consider the following 178-residue polypeptide: Large ribosomal subunit protein uL6 (178 aa).

This sequence belongs to the universal ribosomal protein uL6 family. As to quaternary structure, part of the 50S ribosomal subunit.

Functionally, this protein binds to the 23S rRNA, and is important in its secondary structure. It is located near the subunit interface in the base of the L7/L12 stalk, and near the tRNA binding site of the peptidyltransferase center. The sequence is that of Large ribosomal subunit protein uL6 from Listeria monocytogenes serotype 4a (strain HCC23).